The primary structure comprises 324 residues: Elongation factor Ts, mitochondrial (324 aa).

The N-terminal 44 residues, 1–44 (MSLLRSLRFFPVACTGRSARAVLLQPSQPWHTLHAGPSLSSSAS), are a transit peptide targeting the mitochondrion. K75 and K132 each carry N6-succinyllysine. Position 269 is a phosphoserine (S269).

The protein belongs to the EF-Ts family.

Its subcellular location is the mitochondrion. Its function is as follows. Associates with the EF-Tu.GDP complex and induces the exchange of GDP to GTP. It remains bound to the aminoacyl-tRNA.EF-Tu.GTP complex up to the GTP hydrolysis stage on the ribosome. The polypeptide is Elongation factor Ts, mitochondrial (Tsfm) (Rattus norvegicus (Rat)).